We begin with the raw amino-acid sequence, 822 residues long: AP-1 complex subunit gamma-1 (822 aa).

Residues 597–628 (EIVQTNGETEPAPLETKPPPSGPQPTSQANDL) form a disordered region. Residues 702–817 (AGIPSITAYS…QDLAEVNNFP (116 aa)) enclose the GAE domain.

This sequence belongs to the adaptor complexes large subunit family. Adaptor protein complex 1 (AP-1) is a heterotetramer composed of two large adaptins (gamma-type subunit AP1G1 and beta-type subunit AP1B1), a medium adaptin (mu-type subunit AP1M1 or AP1M2) and a small adaptin (sigma-type subunit AP1S1 or AP1S2 or AP1S3). Interacts (via GAE domain) with RABEP1. Interacts with EPS15. Interacts with SYNRG/gamma-synergin. Interacts (via GAE domain) with AP1AR (via coiled-coil domain). Interacts with CLN3 (via dileucine motif); this interaction facilitates lysosomal targeting. Interacts (via GAE domain) with AFTPH/aftiphilin; the interaction is required to recruit AFTPH/aftiphilin to the perinuclear region of the cell.

The protein resides in the golgi apparatus. It is found in the cytoplasmic vesicle. It localises to the clathrin-coated vesicle membrane. Its subcellular location is the cytoplasm. The protein localises to the perinuclear region. The protein resides in the clathrin-coated vesicle. It is found in the membrane. It localises to the clathrin-coated pit. Subunit of clathrin-associated adaptor protein complex 1 that plays a role in protein sorting in the late-Golgi/trans-Golgi network (TGN) and/or endosomes. The AP complexes mediate both the recruitment of clathrin to membranes and the recognition of sorting signals within the cytosolic tails of transmembrane cargo molecules. In association with AFTPH/aftiphilin in the aftiphilin/p200/gamma-synergin complex, involved in the trafficking of transferrin from early to recycling endosomes, and the membrane trafficking of furin and the lysosomal enzyme cathepsin D between the trans-Golgi network (TGN) and endosomes. This is AP-1 complex subunit gamma-1 (AP1G1) from Pongo abelii (Sumatran orangutan).